The chain runs to 717 residues: uncharacterized protein (717 aa).

The protein belongs to the asfivirus C717R family.

Its subcellular location is the virion. This is an uncharacterized protein from African swine fever virus (isolate Tick/Malawi/Lil 20-1/1983) (ASFV).